The chain runs to 537 residues: MALVHLTALAACGLLLVILRAAFNSWRLQRKLPPGPPGAPLIGNILQLPKVRAHQKFTEWARTYGGLYSFRIGPATAAVVTDRALVKELFDKRSALYSSRPTSYVGQNIITRGDHLLVMDYSDNWRLFRKAINQHFMASMCEKTHVRLLEAEHTQMMRDFLLHPEKHMLHTKRTTNSIIMSLLFGIRTPSWDTPHMQELYEIMEIWSQIMETGATPPVDIFPWLHWVPQQWLGHWVDRSQTVARGMKRLYSSFHRRAIEARRKAESTSQSRARTFLDDVLDLQEKLGLTDNQVDFLGGVMMEGGSDTGSTMLLVMIQALALHPEIQQRARAELDAVCGEHRSPTWEDFPRLPYINMIVKETMRWRPVTPLAFPHALNKDDWVNGYFLPKGTTVFLNVWGLHHDENIFPNPDQFDPSRFEGRHKLAFDYAASPDYMQRDHYIYGAGRRLCPGIHLSERSMFLGAAKLLWAFNFEPARDEDGNPIRIDTDPVTGYTEGFLVCPRPYQCNVTPRSPAHAETILREFSRAESEVLSQYAMP.

A signal peptide spans 1–21 (MALVHLTALAACGLLLVILRA). Cysteine 449 lines the heme pocket.

It belongs to the cytochrome P450 family. Requires heme as cofactor.

It functions in the pathway secondary metabolite biosynthesis; terpenoid biosynthesis. In terms of biological role, cytochrome P450 monooxygenase; part of the gene cluster that mediates the biosynthesis of yanuthone D, a fungal isoprenoid epoxycyclohexenone that acts as an antibiotic against fungi and bacteria. The first step of the pathway is the synthesis of 6-methylsalicylic acid (6-MSA) by the polyketide synthase yanA. 6-MSA is then converted to m-cresol by the decarboxylase yanB. The cytochrome P450 monooxygenase yanC then catalyzes the oxidation of m-cresol to toluquinol. Epoxidation of toluquinol is then performed by the short chain dehydrogenase yanD, with the help of yanE, and a further prenylation by yanG leads to 7-deacetoxyyanuthone A. The next step is the hydroxylation of C-22 of 7-deacetoxyyanuthone A by the cytochrome P450 monooxygenase yanH to yield 22-deacetylyanuthone A. O-Mevalon transferase yanI then attaches mevalon to the hydroxyl group of 22-deacetylyanuthone A to produce yanuthone E. Finally, the FAD-dependent monooxygenase yanF oxidizes the hydroxyl group at C15 of yanuthone E to form yanuthone D. Furthermore, several branching points in the pathway lead to the production of yanuthones F and G from 7-deacetoxyyanuthone A; yanuthones H and I from 22-deacetylyanuthone A; and yanuthone J from yanuthone E. YanC is also involved in the synthesis of yanuthone X1 which does not have 6-methylsalicylic acid (6-MSA) as precursor. The polypeptide is Cytochrome P450 monooxygenase yanC (Aspergillus niger (strain ATCC 1015 / CBS 113.46 / FGSC A1144 / LSHB Ac4 / NCTC 3858a / NRRL 328 / USDA 3528.7)).